A 263-amino-acid chain; its full sequence is Endonuclease 8 (263 aa).

The active-site Schiff-base intermediate with DNA is the Pro2. The active-site Proton donor is Glu3. Residue Lys53 is the Proton donor; for beta-elimination activity of the active site. Positions 70, 125, and 169 each coordinate DNA. The FPG-type zinc finger occupies Lys229–Lys263. The Proton donor; for delta-elimination activity role is filled by Arg253.

The protein belongs to the FPG family. Zn(2+) is required as a cofactor.

It carries out the reaction 2'-deoxyribonucleotide-(2'-deoxyribose 5'-phosphate)-2'-deoxyribonucleotide-DNA = a 3'-end 2'-deoxyribonucleotide-(2,3-dehydro-2,3-deoxyribose 5'-phosphate)-DNA + a 5'-end 5'-phospho-2'-deoxyribonucleoside-DNA + H(+). Involved in base excision repair of DNA damaged by oxidation or by mutagenic agents. Acts as a DNA glycosylase that recognizes and removes damaged bases. Has a preference for oxidized pyrimidines, such as thymine glycol, 5,6-dihydrouracil and 5,6-dihydrothymine. Has AP (apurinic/apyrimidinic) lyase activity and introduces nicks in the DNA strand. Cleaves the DNA backbone by beta-delta elimination to generate a single-strand break at the site of the removed base with both 3'- and 5'-phosphates. The protein is Endonuclease 8 of Salmonella dublin (strain CT_02021853).